Here is a 206-residue protein sequence, read N- to C-terminus: Phosphoserine phosphatase (206 aa).

D7 functions as the Nucleophile in the catalytic mechanism. 2 residues coordinate Mg(2+): D7 and D9. D9 functions as the Proton donor in the catalytic mechanism. Substrate contacts are provided by residues E16, R52, 95 to 96, and K140; that span reads SG. D163 serves as a coordination point for Mg(2+). Residue N166 participates in substrate binding.

This sequence belongs to the HAD-like hydrolase superfamily. SerB family. Mg(2+) serves as cofactor.

The catalysed reaction is O-phospho-L-serine + H2O = L-serine + phosphate. The enzyme catalyses O-phospho-D-serine + H2O = D-serine + phosphate. It participates in amino-acid biosynthesis; L-serine biosynthesis; L-serine from 3-phospho-D-glycerate: step 3/3. In Wolinella succinogenes (strain ATCC 29543 / DSM 1740 / CCUG 13145 / JCM 31913 / LMG 7466 / NCTC 11488 / FDC 602W) (Vibrio succinogenes), this protein is Phosphoserine phosphatase.